The following is a 936-amino-acid chain: MAEMEKEGRPPESKRSRKPAHPVKREINAEMKVPSNRPLPGAGQAGNLHGNSPYLMSFAENTMNELLGWYGYDKVELRDSDDIEIRNYPDGEMRQHISVLKENSLPKASTLENSSGSPPHANSSGSTPTSRNGVTAESSVNPSSSKEHGGLPIIVPLIPPPLIKAPAEEDSSNVQIMCAWCQKVGVKRYSLSMGSELKSFCSEKCFAACRRAYFKRNKLGYVRNCSAREEEGVPTHSLSKDTPRLVLKTNSDVLVCDWCKHIRHTKEYLDFGAGERRLQFCSAKCLNQYKMDIFYKETQAALPGGLCNPPLPTSDTKSESGAGVQLLTPESWSAPLSELRSRKAPSPVGATIAGPSGSTSGSPSEAGTVCSSSSSSSSSSSSTKIPTPRPHESPSLPPPHPPPISGLHPALGMPPGSPPMVMTPRGPVPFPIFMEHQMMQQMRPPFLRPPGPNSPHSNPMIPGIGPPPPPRTLCPPSSPMHRPLLSPHLHPSSTPTLSGNPPGIMPPHPAAHMPGLPFPPVNMMPSGPIPVPPIMNIGMPSLAPLVPPPTLLVPYPVIVPLPVPIPIPVPIPYNPQRSGDRPGNDGTLPNTANEQKDSKAPPSFSSRGEERDFQKAPPNSDTLSPEFSKQTEQGRTNMADLMVKMENSGKGSSEHSHKDTPADGVIDLTTSHRSRQQLVIQRAVTCVQVKAEPGLSPPPALLGETELDGSTSISTGTAKDDHRDTYSNAESPLASVALPCADPSYCSGTPPLSQPITCSASIIPSNITTAKTEPGSATPCNVIVNGSCNLPPTESLIRTPPLEQRPQVDTCRRTATVCDEPAGADLEGEDLKENSCLATEKDSAGKRCSNDQSAITTGTGDDKSQSPEDDPSGEDHAYALPLMPKPGCVIQPVPKPAEKTAAILPCGLTAPLTGTVPMEMEPPLKRRCLRIRNQNK.

The span at methionine 1–lysine 14 shows a compositional bias: basic and acidic residues. Disordered stretches follow at residues methionine 1–glycine 46 and alanine 108–leucine 151. The span at alanine 108–serine 144 shows a compositional bias: polar residues. FCS-type zinc fingers lie at residues glutamate 169–alanine 207 and leucine 247–asparagine 287. Disordered regions lie at residues leucine 311–glutamate 330, leucine 336–proline 424, serine 486–alanine 511, asparagine 574–glutamate 632, proline 697–serine 727, and aspartate 842–alanine 877. The segment covering glycine 349–serine 382 has biased composition (low complexity). A compositionally biased stretch (pro residues) spans serine 395–isoleucine 404. 3 stretches are compositionally biased toward polar residues: residues proline 617–glutamate 632, aspartate 708–threonine 717, and asparagine 850–threonine 859.

This sequence belongs to the SOBP family.

In terms of biological role, implicated in development of the cochlea. This chain is Sine oculis-binding protein homolog A (sobpa), found in Danio rerio (Zebrafish).